The following is a 176-amino-acid chain: Tubulin polymerization-promoting protein family member 3 (176 aa).

Ala2 bears the N-acetylalanine mark. The tract at residues 132-152 (TGSHKERFDESGKGKGIAGRQ) is disordered. Residues 134–144 (SHKERFDESGK) are compositionally biased toward basic and acidic residues.

Belongs to the TPPP family.

Its subcellular location is the cytoplasm. It is found in the cytoskeleton. Regulator of microtubule dynamic that has microtubule bundling activity. Required for embryo implantation; possibly by regulating beta-catenin. Also required for decidualization via regulation of beta-catenin. This chain is Tubulin polymerization-promoting protein family member 3, found in Mus musculus (Mouse).